Reading from the N-terminus, the 251-residue chain is MAGVLDEALTTVFRTPVRLRAAGRTDAGVHATGQVAHLDVPGTALPNAYPRAPHVGEAEFGPLLRRLGRFLPTDVRVVDITRAPAGFDARFSALRRHYVYRLSTAPWGVLPQQARYVTAWPRPLDVEAMAAASRDLLGLHDFAAFCRHRENATTIRDLQRLDWTRDGDLITARVSADAFCWSMVRSLVGALLAVGENRRPVSWCRELLSATNRSSDYATAPAHGLTLVGVDYPPDDQLAARNLITRDVRSR.

The active-site Nucleophile is the Asp-26. Position 98 (Tyr-98) interacts with substrate.

Belongs to the tRNA pseudouridine synthase TruA family. As to quaternary structure, homodimer.

The catalysed reaction is uridine(38/39/40) in tRNA = pseudouridine(38/39/40) in tRNA. Formation of pseudouridine at positions 38, 39 and 40 in the anticodon stem and loop of transfer RNAs. The sequence is that of tRNA pseudouridine synthase A from Mycolicibacterium paratuberculosis (strain ATCC BAA-968 / K-10) (Mycobacterium paratuberculosis).